The chain runs to 457 residues: TnpB-like protein ORF457 (457 aa).

Positions 1–22 (MPPSSGQLLGDEEREPTSTPAI) are disordered.

This sequence in the N-terminal section; belongs to the transposase 2 family. In the C-terminal section; belongs to the transposase 35 family.

The sequence is that of TnpB-like protein ORF457 from Acidianus two-tailed virus (ATV).